A 2496-amino-acid chain; its full sequence is Hornerin (2496 aa).

The interval 1 to 81 is S-100-like; sequence MPKLLESIVT…TEYLLMILKL (81 aa). 2 consecutive EF-hand domains span residues 13 to 48 and 49 to 84; these read DVFYQYATEYGNCDMLSKEEMKELLVTEFHQILKNP and DDPDTVDIIMQNLDRDHNHKVDFTEYLLMILKLTKA. Ca(2+) contacts are provided by Met-27, Glu-32, Asp-62, Asp-64, Asn-66, Lys-68, and Glu-73. A s (spacer) region spans residues 82-98; it reads TKACNKIIGKDYCQASG. The tract at residues 97–2496 is disordered; that stretch reads SGSKQKNHSH…SGQTSGCGSG (2400 aa). The 1; truncated repeat unit spans residues 99–145; the sequence is SKQKNHSHQHQEEQSKKETENKEQKGSISSSAGENDSYSRGSRGSNK. A compositionally biased stretch (basic and acidic residues) spans 107–123; sequence QHQEEQSKKETENKEQK. Polar residues predominate over residues 124 to 134; the sequence is GSISSSAGEND. The span at 144 to 153 shows a compositional bias: basic residues; the sequence is NKSKSKKLRK. A run of 27 repeats spans residues 146-231, 232-321, 326-400, 401-491, 492-577, 578-668, 669-748, 749-839, 840-926, 927-1017, 1018-1097, 1098-1188, 1189-1274, 1275-1365, 1366-1445, 1446-1536, 1537-1622, 1623-1713, 1714-1793, 1794-1884, 1885-1970, 1971-2061, 2062-2141, 2142-2232, 2233-2312, 2313-2403, and 2410-2496. Composition is skewed to low complexity over residues 183–194, 200–246, and 270–286; these read SGFSNSSGNGRP, SGFP…SGHS, and RESSGSQEYSSGSSEEP. 2 stretches are compositionally biased toward polar residues: residues 294–319 and 326–355; these read RKNSSTCGKNGSYSGQSTGRHQQGFG and SGQSITSANHGSHSNQSSCSGTRECGSSES. Composition is skewed to low complexity over residues 362–379, 394–415, and 423–448; these read VSGSGHSSSTGKYTSTSG, SSGSEQYGASSGQSSGCSSGQS, and SGSRNSSTQSRGRSTSRESSTSQQFG. Positions 449–464 are enriched in gly residues; the sequence is SGSGRSSGFSQGGSGQ. The segment covering 465–565 has biased composition (low complexity); it reads GRSSRGGQQG…GQTSSSTRQG (101 aa). Residues Ser-506 and Ser-508 each carry the phosphoserine modification. The segment covering 566-576 has biased composition (gly residues); it reads SGQGQASGSGR. Composition is skewed to low complexity over residues 577 to 593 and 600 to 625; these read YGASSGQTSGCGSGQST and SGSRNSSTQSRGRSTSRESSTSQRYG. Over residues 626–641 the composition is skewed to gly residues; the sequence is SGSGESSGFSQGGSGQ. Low complexity-rich tracts occupy residues 642-670 and 679-713; these read GRSSRGGQQGSFSGQTSGRSQHQSGSRHG and SGQQGSHHGHSSSSGTHNSGSSQSSSTQWSHGSGS. The residue at position 646 (Arg-646) is an Omega-N-methylarginine. Ser-716 carries the phosphoserine modification. Residues 723-736 are compositionally biased toward low complexity; the sequence is GSTSGQTASSTRQG. Residues 737-747 are compositionally biased toward gly residues; the sequence is SGQGQASGSGR. Composition is skewed to low complexity over residues 748-764, 771-796, 804-884, and 891-914; these read CGASSGQTSGCGSGQST, SGSRNSSTQSRGRSTSRESSTSQRFG, GFSQ…SRPA, and SGRSSGLGQYGSPSGQTSSSTRQG. Position 815 is a phosphoserine (Ser-815). A compositionally biased stretch (gly residues) spans 915 to 925; it reads SGQGQASGSGR. Low complexity-rich tracts occupy residues 926 to 942 and 949 to 974; these read YGASSGQTSGCGSGQST and SGSRNSSTQSRGRSTSRESSTSQRYG. The span at 975–990 shows a compositional bias: gly residues; sequence SGSGESSGFSQGGSGQ. Composition is skewed to low complexity over residues 991-1019, 1028-1062, and 1072-1085; these read GRSSRGGQQGSFSGQTSGRSQHQSGSRHG, SGQQGSHHGHSSSSGTHNSGSSQSSSTQWSHGSGS, and GSTSGQTASSTRQG. Residue Arg-995 is modified to Omega-N-methylarginine. The segment covering 1086–1096 has biased composition (gly residues); the sequence is SGQGQASGSGR. Low complexity-rich tracts occupy residues 1097–1113, 1120–1145, and 1153–1262; these read CGASSGQTSGCGSGQST, SGSRNSSTQSRGRSTSRESSTSQRFG, and GFSQ…TRQG. Ser-1229 is subject to Phosphoserine. Over residues 1263–1273 the composition is skewed to gly residues; that stretch reads SGQGQASGSGR. Residues 1281-1292 are compositionally biased toward polar residues; the sequence is TSGCRSGQSTRY. The span at 1298–1322 shows a compositional bias: low complexity; the sequence is GSRNSSTQSRGRSTSRESSTSQRYG. Positions 1323-1338 are enriched in gly residues; that stretch reads SGSGESSGFSQGGSGQ. Composition is skewed to low complexity over residues 1339-1367, 1376-1410, and 1420-1433; these read GRSSRGGQQGSFSGQTSGRNQHQSGSRHG, SGQQGSHHGHSSSSGTHNSGSSQSSSTQWSHGSGS, and GSTSGQTASSTRQG. Arg-1343 is modified (omega-N-methylarginine). Residues 1434 to 1444 show a composition bias toward gly residues; that stretch reads SGQGQASGSGR. 3 stretches are compositionally biased toward low complexity: residues 1445–1461, 1468–1493, and 1501–1610; these read CGASSGQTSGCGSGQST, SGSRNSSTQSRGRSTSRESSTSQRFG, and GFSQ…TRQG. A phosphoserine mark is found at Ser-1551 and Ser-1553. The segment covering 1611–1621 has biased composition (gly residues); it reads SGQGQASGSGR. 2 stretches are compositionally biased toward low complexity: residues 1622–1631 and 1645–1670; these read YGASSGQTSG and SGSRNSSTQSRGRSTSRESSTSQRCG. Phosphoserine is present on Ser-1650. Residues 1671-1686 are compositionally biased toward gly residues; it reads SGSGESSGFSQGGSGQ. 3 stretches are compositionally biased toward low complexity: residues 1687 to 1715, 1724 to 1758, and 1768 to 1781; these read GRSSRGGQQGSFSGQTSGRSQHQSGSRHG, SGQQGSHHGHSSSSGTHNSGSSQSSSTQWSHGSGS, and GSTSGQTASSTRQG. The residue at position 1691 (Arg-1691) is an Omega-N-methylarginine. The segment covering 1782–1792 has biased composition (gly residues); it reads SGQGQASGSGR. The span at 1800–1811 shows a compositional bias: polar residues; sequence TSGCGSDQSTRY. Low complexity-rich tracts occupy residues 1816–1841 and 1849–1958; these read SGSRNSSTQSRGRSTSRESSTSQRFG and GFSQ…TRQG. The segment covering 1959–1969 has biased composition (gly residues); it reads SGQGQASGSGR. 2 stretches are compositionally biased toward low complexity: residues 1970 to 1986 and 1993 to 2018; these read YGASSGQTSGCGSGQST and SGSRNSSTQSRGRSTSRESSTSQRYG. Ser-2011 is subject to Phosphoserine. Over residues 2019–2034 the composition is skewed to gly residues; that stretch reads SGSGESSGFSQGGSGQ. 2 stretches are compositionally biased toward low complexity: residues 2035–2063 and 2072–2106; these read GRSSRGGQQGSFSGQTSGRSQHQSGSRHG and SGQQGSHHGHSSSSGTHNSGSSQSSSTQWSHGSGS. Omega-N-methylarginine is present on Arg-2039. Phosphoserine occurs at positions 2109 and 2124. Residues 2116-2129 show a composition bias toward low complexity; it reads GSTSGQTASSTRQG. A compositionally biased stretch (gly residues) spans 2130 to 2140; the sequence is SGQGQASGSGR. 2 stretches are compositionally biased toward low complexity: residues 2141–2157 and 2164–2189; these read CGASSGQTSGCGSGQST and SGSRNSSTQSRGRSTSRESSTSQRYG. Gly residues predominate over residues 2190 to 2205; the sequence is SGSGESSGFSQGGSGQ. Low complexity-rich tracts occupy residues 2206–2234 and 2243–2300; these read GRSSRGGQQGSFSGQTSGRSQHQSGSRHG and SGQQ…TRQG. Arg-2210 carries the post-translational modification Omega-N-methylarginine. Gly residues predominate over residues 2301–2311; it reads SGQGQASGSGR. Composition is skewed to low complexity over residues 2312–2328 and 2335–2360; these read YGASSGQTSGCGSGQST and SGSRNSSTQSRGRSTSRESSTSQRYG. Ser-2353 is subject to Phosphoserine. The span at 2361–2376 shows a compositional bias: gly residues; it reads SGSGESSGFSQGGSGQ. 3 stretches are compositionally biased toward low complexity: residues 2377–2405, 2414–2448, and 2458–2471; these read GRSSRGGQQGSFSGQTSGRSQHQSGSRHG, SGQQGSHHGHSSSSGTHNSGSSQSSSTQWSHGSGS, and GSTSGQTASSTRQG. Arg-2381 carries the post-translational modification Omega-N-methylarginine. Positions 2472 to 2482 are enriched in gly residues; sequence SGQGQASGSGR.

The protein belongs to the S100-fused protein family. This sequence in the N-terminal section; belongs to the S-100 family. Processed during the process of epidermal differentiation. Post-translationally, forms covalent cross-links mediated by transglutaminase TGM3, between glutamine and the epsilon-amino group of lysine residues (in vitro). As to expression, embryonic skin. Highest level in the adult forestomach followed by the skin. Lower levels in the tongue, esophagus. Detected in the granular and cornified layers of the mature epidermis.

Its subcellular location is the cytoplasmic granule. Functionally, component of the epidermal cornified cell envelopes. This Mus musculus (Mouse) protein is Hornerin (Hrnr).